Consider the following 513-residue polypeptide: ATP synthase subunit alpha (513 aa).

169-176 (GDRQIGKT) is a binding site for ATP.

This sequence belongs to the ATPase alpha/beta chains family. As to quaternary structure, F-type ATPases have 2 components, CF(1) - the catalytic core - and CF(0) - the membrane proton channel. CF(1) has five subunits: alpha(3), beta(3), gamma(1), delta(1), epsilon(1). CF(0) has three main subunits: a(1), b(2) and c(9-12). The alpha and beta chains form an alternating ring which encloses part of the gamma chain. CF(1) is attached to CF(0) by a central stalk formed by the gamma and epsilon chains, while a peripheral stalk is formed by the delta and b chains.

The protein localises to the cell inner membrane. The enzyme catalyses ATP + H2O + 4 H(+)(in) = ADP + phosphate + 5 H(+)(out). In terms of biological role, produces ATP from ADP in the presence of a proton gradient across the membrane. The alpha chain is a regulatory subunit. The chain is ATP synthase subunit alpha from Francisella tularensis subsp. holarctica (strain OSU18).